We begin with the raw amino-acid sequence, 402 residues long: 1-deoxy-D-xylulose 5-phosphate reductoisomerase (402 aa).

Positions 10, 11, 12, 13, 38, and 124 each coordinate NADPH. Lys-125 lines the 1-deoxy-D-xylulose 5-phosphate pocket. Position 126 (Glu-126) interacts with NADPH. Position 150 (Asp-150) interacts with Mn(2+). Positions 151, 152, 186, and 209 each coordinate 1-deoxy-D-xylulose 5-phosphate. Glu-152 is a binding site for Mn(2+). Gly-215 is a binding site for NADPH. Ser-222, Asn-227, Lys-228, and Glu-231 together coordinate 1-deoxy-D-xylulose 5-phosphate. Glu-231 lines the Mn(2+) pocket.

It belongs to the DXR family. Mg(2+) serves as cofactor. Mn(2+) is required as a cofactor.

It catalyses the reaction 2-C-methyl-D-erythritol 4-phosphate + NADP(+) = 1-deoxy-D-xylulose 5-phosphate + NADPH + H(+). The protein operates within isoprenoid biosynthesis; isopentenyl diphosphate biosynthesis via DXP pathway; isopentenyl diphosphate from 1-deoxy-D-xylulose 5-phosphate: step 1/6. Catalyzes the NADPH-dependent rearrangement and reduction of 1-deoxy-D-xylulose-5-phosphate (DXP) to 2-C-methyl-D-erythritol 4-phosphate (MEP). The protein is 1-deoxy-D-xylulose 5-phosphate reductoisomerase of Vibrio vulnificus (strain YJ016).